A 186-amino-acid chain; its full sequence is dCTP deaminase (186 aa).

107–112 contacts dCTP; that stretch reads KSTYAR. The Proton donor/acceptor role is filled by glutamate 133. DCTP-binding residues include glutamine 152, tyrosine 166, and glutamine 176.

The protein belongs to the dCTP deaminase family. Homotrimer.

It carries out the reaction dCTP + H2O + H(+) = dUTP + NH4(+). It functions in the pathway pyrimidine metabolism; dUMP biosynthesis; dUMP from dCTP (dUTP route): step 1/2. Functionally, catalyzes the deamination of dCTP to dUTP. The protein is dCTP deaminase of Campylobacter curvus (strain 525.92).